The chain runs to 470 residues: Origin of replication complex subunit 4 (470 aa).

Residue 63–70 coordinates ATP; sequence GPRGCGKA.

It belongs to the ORC4 family. In terms of assembly, component of the origin recognition complex (ORC) composed of at least ORC1, ORC2, ORC3, ORC4, ORC5 and ORC6. ORC is regulated in a cell-cycle and development dependent manner. It is sequentially assembled at the exit from anaphase of mitosis and disassembled as cells enter S phase. Expressed in the shoot apical meristem (SAM), leaves, ears and roots (including root tips).

The protein resides in the nucleus. Component of the origin recognition complex (ORC) that binds origins of replication. DNA-binding is ATP-dependent. The specific DNA sequences that define origins of replication have not been identified yet. ORC is required to assemble the pre-replication complex necessary to initiate DNA replication. This chain is Origin of replication complex subunit 4, found in Oryza sativa subsp. japonica (Rice).